Reading from the N-terminus, the 347-residue chain is Iron-sulfur cluster assembly protein SufC (347 aa).

In terms of domain architecture, ABC transporter spans 100–346; that stretch reads LEIKDLHAIE…ENKGYSQFLK (247 aa). 134–141 contacts ATP; the sequence is GRNGSGKS.

The protein belongs to the ABC transporter superfamily. Ycf16 family. Component of a complex composed of SufB, SufC and SufD in a stoichiometric ratio of 1:2:1. Interacts with SufB. Interacts with SufD; the interaction enhances the ATPase activity of SufC. In terms of processing, proteolytically cleaved.

Its subcellular location is the plastid. It localises to the apicoplast. The catalysed reaction is ATP + H2O = ADP + phosphate + H(+). The protein operates within cofactor biosynthesis; iron-sulfur cluster biosynthesis. In terms of biological role, participates in the sulfur mobilization (SUF) pathway for iron-sulfur (Fe-S) cluster biogenesis. As part of a complex consisting of SufB-SufC(2)-SufD, involved in assembly of [4Fe-4S] clusters. Exhibits ATPase activity. The chain is Iron-sulfur cluster assembly protein SufC from Plasmodium falciparum (isolate 3D7).